The sequence spans 261 residues: (3R)-3-hydroxyacyl-CoA dehydrogenase (261 aa).

NAD(+) is bound by residues 15–23 (LVTGAGSGI) and 42–43 (DL). Ser60 is modified (phosphoserine). 74-76 (ADV) contacts NAD(+). Position 156 (Ser156) interacts with substrate. Lys160 carries the N6-succinyllysine modification. Residue Tyr169 is the Proton acceptor of the active site. NAD(+) is bound by residues 169–173 (YAASK) and 202–204 (IAT). The residue at position 173 (Lys173) is an N6-succinyllysine.

Belongs to the short-chain dehydrogenases/reductases (SDR) family. In terms of assembly, heterotetramer with CBR4; contains two molecules of HSD17B8 and CBR4. As to expression, widely expressed, particularly abundant in prostate, placenta and kidney. Expressed at protein level in various tissues like brain, cerebellum, heart, lung, kidney, ovary, testis, adrenals and prostate.

It localises to the mitochondrion matrix. The enzyme catalyses a (3R)-3-hydroxyacyl-CoA + NAD(+) = a 3-oxoacyl-CoA + NADH + H(+). The catalysed reaction is 17beta-estradiol + NAD(+) = estrone + NADH + H(+). It catalyses the reaction testosterone + NAD(+) = androst-4-ene-3,17-dione + NADH + H(+). It carries out the reaction 17beta-hydroxy-5alpha-androstan-3-one + NAD(+) = 5alpha-androstan-3,17-dione + NADH + H(+). It participates in steroid biosynthesis; estrogen biosynthesis. The protein operates within lipid metabolism; fatty acid biosynthesis. Its pathway is lipid metabolism; mitochondrial fatty acid beta-oxidation. Its function is as follows. Required for the solubility and assembly of the heterotetramer 3-ketoacyl-[acyl carrier protein] (ACP) reductase functional complex (KAR or KAR1) that forms part of the mitochondrial fatty acid synthase (mtFAS). Alpha-subunit of the KAR complex that acts as a scaffold protein required for the stability of carbonyl reductase type-4 (CBR4, beta-subunit of the KAR complex) and for its 3-ketoacyl-ACP reductase activity, thereby participating in mitochondrial fatty acid biosynthesis. Catalyzes the NAD-dependent conversion of (3R)-3-hydroxyacyl-CoA into 3-ketoacyl-CoA (3-oxoacyl-CoA) with no chain length preference; this enzymatic activity is not needed for the KAR function. Prefers (3R)-3-hydroxyacyl-CoA over (3S)-3-hydroxyacyl-CoA and displays enzymatic activity only in the presence of NAD(+). Cooperates with enoyl-CoA hydratase 1 in mitochondria, together they constitute an alternative route to the auxiliary enzyme pathways for the breakdown of Z-PUFA (cis polyunsaturated fatty acid) enoyl-esters. NAD-dependent 17-beta-hydroxysteroid dehydrogenase with highest activity towards estradiol (17beta-estradiol or E2). Has very low activity towards testosterone and dihydrotestosterone (17beta-hydroxy-5alpha-androstan-3-one). Primarily an oxidative enzyme, it can switch to a reductive mode determined in the appropriate physiologic milieu and catalyze the reduction of estrone (E1) to form biologically active 17beta-estradiol. This Homo sapiens (Human) protein is (3R)-3-hydroxyacyl-CoA dehydrogenase (HSD17B8).